We begin with the raw amino-acid sequence, 268 residues long: D-alanyl-D-alanine carboxypeptidase (268 aa).

A helical transmembrane segment spans residues alanine 25–serine 47. Substrate is bound by residues glutamine 151, tryptophan 179–alanine 181, and serine 186. Zn(2+)-binding residues include histidine 188 and aspartate 195. The Proton donor/acceptor role is filled by glutamate 238. Position 241 (histidine 241) interacts with Zn(2+).

It belongs to the peptidase M15B family. In terms of assembly, monomer. The cofactor is Zn(2+).

The protein resides in the cell membrane. Carboxypeptidase activity is insensitive to beta-lactams since it is not affected by penicillin G or ampicillin and is inhibited only by very high concentrations of cefalotin and cefoxitin. In terms of biological role, carboxypeptidase that cleaves the C-terminal D-alanine residue from the peptidoglycan-derived pentapeptide L-Ala-gamma-D-Glu-L-Lys-D-Ala-D-Ala in vitro. Therefore, should contribute in vivo to the hydrolysis of the D-alanyl-D-alanine-containing peptidoglycan precursors. May increase the level of glycopeptide antibiotics resistance by decreasing the availability of D-Ala-D-Ala termini from the cell surface, which constitute the antibiotic target residues. The protein is D-alanyl-D-alanine carboxypeptidase of Enterococcus faecalis (strain ATCC 700802 / V583).